A 187-amino-acid chain; its full sequence is Adenine phosphoribosyltransferase (187 aa).

Belongs to the purine/pyrimidine phosphoribosyltransferase family. As to quaternary structure, homodimer.

The protein localises to the cytoplasm. The catalysed reaction is AMP + diphosphate = 5-phospho-alpha-D-ribose 1-diphosphate + adenine. Its pathway is purine metabolism; AMP biosynthesis via salvage pathway; AMP from adenine: step 1/1. In terms of biological role, catalyzes a salvage reaction resulting in the formation of AMP, that is energically less costly than de novo synthesis. The sequence is that of Adenine phosphoribosyltransferase from Yersinia enterocolitica serotype O:8 / biotype 1B (strain NCTC 13174 / 8081).